The sequence spans 198 residues: Glycerol-3-phosphate acyltransferase 1 (198 aa).

5 helical membrane-spanning segments follow: residues A5–A25, G52–A72, W81–F101, F111–A131, and F138–P158.

The protein belongs to the PlsY family. In terms of assembly, probably interacts with PlsX.

It is found in the cell membrane. The catalysed reaction is an acyl phosphate + sn-glycerol 3-phosphate = a 1-acyl-sn-glycero-3-phosphate + phosphate. It participates in lipid metabolism; phospholipid metabolism. In terms of biological role, catalyzes the transfer of an acyl group from acyl-phosphate (acyl-PO(4)) to glycerol-3-phosphate (G3P) to form lysophosphatidic acid (LPA). This enzyme utilizes acyl-phosphate as fatty acyl donor, but not acyl-CoA or acyl-ACP. The polypeptide is Glycerol-3-phosphate acyltransferase 1 (Deinococcus radiodurans (strain ATCC 13939 / DSM 20539 / JCM 16871 / CCUG 27074 / LMG 4051 / NBRC 15346 / NCIMB 9279 / VKM B-1422 / R1)).